We begin with the raw amino-acid sequence, 301 residues long: uncharacterized protein (301 aa).

The next 9 helical transmembrane spans lie at 1 to 21 (MSWIIFYTVIAALLVLDLGIV), 33 to 53 (SVLFSLFYFVIACLFGIYFYY), 72 to 92 (AMSLDNIFVISIIFQFFKIPG), 101 to 121 (FGIIGVIIFRAIMIYGGTILI), 124 to 144 (FAWLLYIFAVILIATGIKTFY), 185 to 205 (YFTPLFISLVLIEAIDLVFAI), 220 to 240 (IIYTSNIFAILGLRALFFCLA), 246 to 266 (FSYIKYSLALILIFIGFKIFI), and 270 to 290 (IAIPAYVSLIVTITLLLFGII).

The protein belongs to the TerC family.

The protein resides in the cell membrane. This is an uncharacterized protein from Rickettsia felis (strain ATCC VR-1525 / URRWXCal2) (Rickettsia azadi).